The following is a 375-amino-acid chain: Alcohol dehydrogenase 1 (375 aa).

N-acetylserine is present on S2. Zn(2+) contacts are provided by C47, H68, C98, C101, C104, C112, and C175. NAD(+) is bound by residues 200–205 (WSGRVG), D224, and K229. N6-succinyllysine is present on K234. An NAD(+)-binding site is contributed by 293–295 (VGV). K340 is subject to N6-succinyllysine. R370 lines the NAD(+) pocket.

It belongs to the zinc-containing alcohol dehydrogenase family. Class-I subfamily. Homodimer. Zn(2+) serves as cofactor.

It localises to the cytoplasm. The enzyme catalyses a primary alcohol + NAD(+) = an aldehyde + NADH + H(+). The catalysed reaction is a secondary alcohol + NAD(+) = a ketone + NADH + H(+). The polypeptide is Alcohol dehydrogenase 1 (ADH1) (Geomys attwateri (Attwater's pocket gopher)).